A 587-amino-acid polypeptide reads, in one-letter code: 2-succinyl-5-enolpyruvyl-6-hydroxy-3-cyclohexene-1-carboxylate synthase (587 aa).

It belongs to the TPP enzyme family. MenD subfamily. Homodimer. Requires Mg(2+) as cofactor. Mn(2+) serves as cofactor. It depends on thiamine diphosphate as a cofactor.

The catalysed reaction is isochorismate + 2-oxoglutarate + H(+) = 5-enolpyruvoyl-6-hydroxy-2-succinyl-cyclohex-3-ene-1-carboxylate + CO2. The protein operates within quinol/quinone metabolism; 1,4-dihydroxy-2-naphthoate biosynthesis; 1,4-dihydroxy-2-naphthoate from chorismate: step 2/7. Its pathway is cofactor biosynthesis; phylloquinone biosynthesis. Functionally, catalyzes the thiamine diphosphate-dependent decarboxylation of 2-oxoglutarate and the subsequent addition of the resulting succinic semialdehyde-thiamine pyrophosphate anion to isochorismate to yield 2-succinyl-5-enolpyruvyl-6-hydroxy-3-cyclohexene-1-carboxylate (SEPHCHC). This chain is 2-succinyl-5-enolpyruvyl-6-hydroxy-3-cyclohexene-1-carboxylate synthase, found in Prochlorococcus marinus (strain AS9601).